A 343-amino-acid chain; its full sequence is S-adenosylmethionine:tRNA ribosyltransferase-isomerase (343 aa).

This sequence belongs to the QueA family. Monomer.

It is found in the cytoplasm. It catalyses the reaction 7-aminomethyl-7-carbaguanosine(34) in tRNA + S-adenosyl-L-methionine = epoxyqueuosine(34) in tRNA + adenine + L-methionine + 2 H(+). The protein operates within tRNA modification; tRNA-queuosine biosynthesis. Its function is as follows. Transfers and isomerizes the ribose moiety from AdoMet to the 7-aminomethyl group of 7-deazaguanine (preQ1-tRNA) to give epoxyqueuosine (oQ-tRNA). The protein is S-adenosylmethionine:tRNA ribosyltransferase-isomerase of Coxiella burnetii (strain RSA 331 / Henzerling II).